The sequence spans 259 residues: Hydroxyethylthiazole kinase 1 (259 aa).

Methionine 38 provides a ligand contact to substrate. ATP contacts are provided by arginine 113 and serine 158. Residue glycine 185 participates in substrate binding.

It belongs to the Thz kinase family. The cofactor is Mg(2+).

The catalysed reaction is 5-(2-hydroxyethyl)-4-methylthiazole + ATP = 4-methyl-5-(2-phosphooxyethyl)-thiazole + ADP + H(+). It functions in the pathway cofactor biosynthesis; thiamine diphosphate biosynthesis; 4-methyl-5-(2-phosphoethyl)-thiazole from 5-(2-hydroxyethyl)-4-methylthiazole: step 1/1. Catalyzes the phosphorylation of the hydroxyl group of 4-methyl-5-beta-hydroxyethylthiazole (THZ). The chain is Hydroxyethylthiazole kinase 1 from Leuconostoc mesenteroides subsp. mesenteroides (strain ATCC 8293 / DSM 20343 / BCRC 11652 / CCM 1803 / JCM 6124 / NCDO 523 / NBRC 100496 / NCIMB 8023 / NCTC 12954 / NRRL B-1118 / 37Y).